A 268-amino-acid polypeptide reads, in one-letter code: Pantothenate synthetase (268 aa).

18–25 (MGYLHEGH) provides a ligand contact to ATP. The active-site Proton donor is His25. Gln49 contacts (R)-pantoate. Gln49 serves as a coordination point for beta-alanine. 135 to 138 (GQKD) is a binding site for ATP. Gln141 provides a ligand contact to (R)-pantoate. Residues Val164 and 172-175 (LSSR) each bind ATP.

It belongs to the pantothenate synthetase family. Homodimer.

The protein localises to the cytoplasm. It catalyses the reaction (R)-pantoate + beta-alanine + ATP = (R)-pantothenate + AMP + diphosphate + H(+). Its pathway is cofactor biosynthesis; (R)-pantothenate biosynthesis; (R)-pantothenate from (R)-pantoate and beta-alanine: step 1/1. Its function is as follows. Catalyzes the condensation of pantoate with beta-alanine in an ATP-dependent reaction via a pantoyl-adenylate intermediate. In Dehalococcoides mccartyi (strain ATCC BAA-2266 / KCTC 15142 / 195) (Dehalococcoides ethenogenes (strain 195)), this protein is Pantothenate synthetase.